The sequence spans 466 residues: Asparagine--tRNA ligase (466 aa).

Belongs to the class-II aminoacyl-tRNA synthetase family. Homodimer.

It localises to the cytoplasm. It catalyses the reaction tRNA(Asn) + L-asparagine + ATP = L-asparaginyl-tRNA(Asn) + AMP + diphosphate + H(+). The protein is Asparagine--tRNA ligase of Shewanella pealeana (strain ATCC 700345 / ANG-SQ1).